Reading from the N-terminus, the 357-residue chain is UDP-N-acetylglucosamine--N-acetylmuramyl-(pentapeptide) pyrophosphoryl-undecaprenol N-acetylglucosamine transferase (357 aa).

UDP-N-acetyl-alpha-D-glucosamine contacts are provided by residues 10–12 (TGG), Asn124, Ser189, Ile244, and Gln289.

This sequence belongs to the glycosyltransferase 28 family. MurG subfamily.

It localises to the cell membrane. The enzyme catalyses Mur2Ac(oyl-L-Ala-gamma-D-Glu-L-Lys-D-Ala-D-Ala)-di-trans,octa-cis-undecaprenyl diphosphate + UDP-N-acetyl-alpha-D-glucosamine = beta-D-GlcNAc-(1-&gt;4)-Mur2Ac(oyl-L-Ala-gamma-D-Glu-L-Lys-D-Ala-D-Ala)-di-trans,octa-cis-undecaprenyl diphosphate + UDP + H(+). The protein operates within cell wall biogenesis; peptidoglycan biosynthesis. In terms of biological role, cell wall formation. Catalyzes the transfer of a GlcNAc subunit on undecaprenyl-pyrophosphoryl-MurNAc-pentapeptide (lipid intermediate I) to form undecaprenyl-pyrophosphoryl-MurNAc-(pentapeptide)GlcNAc (lipid intermediate II). The polypeptide is UDP-N-acetylglucosamine--N-acetylmuramyl-(pentapeptide) pyrophosphoryl-undecaprenol N-acetylglucosamine transferase (Lactococcus lactis subsp. lactis (strain IL1403) (Streptococcus lactis)).